The chain runs to 250 residues: Proteasome subunit alpha type-7-B (250 aa).

A Glycyl lysine isopeptide (Lys-Gly) (interchain with G-Cter in ubiquitin) cross-link involves residue Lys-62.

The protein belongs to the peptidase T1A family. In terms of assembly, component of the 20S core complex of the 26S proteasome. The 26S proteasome is composed of a core protease (CP), known as the 20S proteasome, capped at one or both ends by the 19S regulatory particle (RP/PA700). The 20S proteasome core is composed of 28 subunits that are arranged in four stacked rings, resulting in a barrel-shaped structure. The two end rings are each formed by seven alpha subunits, and the two central rings are each formed by seven beta subunits. The catalytic chamber with the active sites is on the inside of the barrel.

It is found in the cytoplasm. It localises to the nucleus. Functionally, the proteasome is a multicatalytic proteinase complex which is characterized by its ability to cleave peptides with Arg, Phe, Tyr, Leu, and Glu adjacent to the leaving group at neutral or slightly basic pH. The proteasome has an ATP-dependent proteolytic activity. The sequence is that of Proteasome subunit alpha type-7-B (PAD2) from Arabidopsis thaliana (Mouse-ear cress).